A 76-amino-acid chain; its full sequence is Exodeoxyribonuclease 7 small subunit (76 aa).

The protein belongs to the XseB family. Heterooligomer composed of large and small subunits.

It is found in the cytoplasm. The catalysed reaction is Exonucleolytic cleavage in either 5'- to 3'- or 3'- to 5'-direction to yield nucleoside 5'-phosphates.. In terms of biological role, bidirectionally degrades single-stranded DNA into large acid-insoluble oligonucleotides, which are then degraded further into small acid-soluble oligonucleotides. This is Exodeoxyribonuclease 7 small subunit from Legionella pneumophila subsp. pneumophila (strain Philadelphia 1 / ATCC 33152 / DSM 7513).